A 779-amino-acid polypeptide reads, in one-letter code: Ribonucleoside-diphosphate reductase large subunit (779 aa).

Substrate is bound by residues Ser178, 193-194 (SC), Gly222, 420-424 (NLCIE), and 614-618 (PTATS). A disulfide bridge connects residues Cys194 and Cys440. The active-site Proton acceptor is the Asn420. Catalysis depends on Cys422, which acts as the Cysteine radical intermediate. Glu424 serves as the catalytic Proton acceptor.

Belongs to the ribonucleoside diphosphate reductase large chain family. As to quaternary structure, heterotetramer composed of a homodimer of the large subunit (R1) and a homodimer of the small subunit (R2). Larger multisubunit protein complex are also active, composed of (R1)n(R2)n.

It catalyses the reaction a 2'-deoxyribonucleoside 5'-diphosphate + [thioredoxin]-disulfide + H2O = a ribonucleoside 5'-diphosphate + [thioredoxin]-dithiol. Its activity is regulated as follows. Under complex allosteric control mediated by deoxynucleoside triphosphates and ATP binding. The type of nucleotide bound at the specificity site determines substrate preference. It seems probable that ATP makes the enzyme reduce CDP and UDP, dGTP favors ADP reduction and dTTP favors GDP reduction. In terms of biological role, ribonucleoside-diphosphate reductase holoenzyme provides the precursors necessary for viral DNA synthesis. Allows virus growth in non-dividing cells. Catalyzes the biosynthesis of deoxyribonucleotides from the corresponding ribonucleotides. The chain is Ribonucleoside-diphosphate reductase large subunit from Ornithodoros (relapsing fever ticks).